The chain runs to 762 residues: ATP-dependent RNA helicase SUV3 homolog, mitochondrial (762 aa).

Residues 1-36 (MQNTRRCISLICVTRQPPSLRATYGAVAAARCLHRA) constitute a mitochondrion transit peptide. Residues 181-321 (NARALTRKIV…ALELLQKICE (141 aa)) enclose the Helicase ATP-binding domain. ATP is bound at residue 194–201 (GPTNSGKT). Residues 331 to 508 (RYDRLTELTV…PTADQIELYA (178 aa)) form the Helicase C-terminal domain. The interval 716 to 762 (EWDAQQVGQAAAASTSSKESQESPPDDSDDEDSYPGSYKKTRRKRRK) is disordered. Residues 721-730 (QVGQAAAAST) show a composition bias toward polar residues. Residues 739–748 (PPDDSDDEDS) show a composition bias toward acidic residues.

This sequence belongs to the helicase family. Mg(2+) serves as cofactor. It depends on Mn(2+) as a cofactor.

It localises to the mitochondrion. It carries out the reaction ATP + H2O = ADP + phosphate + H(+). Functionally, major helicase player in mitochondrial RNA metabolism and maintenance. Likely component of the mitochondrial degradosome (mtEXO) complex, that degrades 3' overhang double-stranded RNA with a 3'-to-5' directionality in an ATP-dependent manner. ATPase and ATP-dependent multisubstrate helicase, able to unwind double-stranded (ds) DNA and RNA, and RNA/DNA heteroduplexes in the 5'-to-3' direction. Regulates mRNA stability and is required for the correct processing and maturation of mitochondrial transcripts. This Drosophila pseudoobscura pseudoobscura (Fruit fly) protein is ATP-dependent RNA helicase SUV3 homolog, mitochondrial.